The following is a 48-amino-acid chain: Delta-actitoxin-Bgr2b (48 aa).

3 cysteine pairs are disulfide-bonded: Cys4/Cys45, Cys6/Cys35, and Cys28/Cys46.

It belongs to the sea anemone sodium channel inhibitory toxin family. Type I subfamily.

The protein localises to the secreted. Its subcellular location is the nematocyst. Functionally, binds voltage-dependently at site 3 of sodium channels (Nav) and inhibits the inactivation of the activated channels, thereby blocking neuronal transmission. Has effect on SCN4A/SCN1B, and SCN5A/SCN1B, has no effect on SCN2A/SCN1B, and SCN10A/SCN1B. Possesses the highest efficacy for the insect sodium channel para/tipE. Also interacts with sodium channels in cardiac cells. Shows lethality to crabs. In Bunodosoma granuliferum (Red warty sea anemone), this protein is Delta-actitoxin-Bgr2b.